The primary structure comprises 391 residues: Thioredoxin-interacting protein (391 aa).

A Glycyl lysine isopeptide (Lys-Gly) (interchain with G-Cter in ubiquitin) cross-link involves residue Lys-212. Ser-361 bears the Phosphoserine mark.

The protein belongs to the arrestin family. As to quaternary structure, homodimer; disulfide-linked. Interacts with TXN/thioredoxin through its redox-active site. Interacts with transcriptional repressors ZBTB16, ZBTB32 and HDAC1. Interacts with DDIT4. In terms of processing, ubiquitinated; undergoes heterotypic 'Lys-48'-/'Lys-63'-branched polyubiquitination catalyzed by ITCH and UBR5 resulting in proteasomal degradation. Deubiquitinated by USP5, leading to TXNIP stabilization.

It is found in the cytoplasm. It localises to the nucleus. In terms of biological role, may act as an oxidative stress mediator by inhibiting thioredoxin activity or by limiting its bioavailability. Interacts with COPS5 and restores COPS5-induced suppression of CDKN1B stability, blocking the COPS5-mediated translocation of CDKN1B from the nucleus to the cytoplasm. Functions as a transcriptional repressor, possibly by acting as a bridge molecule between transcription factors and corepressor complexes, and over-expression will induce G0/G1 cell cycle arrest. Required for the maturation of natural killer cells. Acts as a suppressor of tumor cell growth. Inhibits the proteasomal degradation of DDIT4, and thereby contributes to the inhibition of the mammalian target of rapamycin complex 1 (mTORC1). In Homo sapiens (Human), this protein is Thioredoxin-interacting protein (TXNIP).